The following is a 1205-amino-acid chain: Transcriptional-regulating factor 1 (1205 aa).

6 disordered regions span residues 201 to 226, 270 to 317, 332 to 351, 390 to 500, 527 to 583, and 601 to 629; these read YQQV…VGQH, YPQP…QRQS, QHLQ…SYHR, PQSH…QTKG, LNGH…PEAE, and PKPS…MSDD. Composition is skewed to low complexity over residues 291 to 317 and 332 to 342; these read QQQQ…QRQS and QHLQEQQQPSM. Polar residues-rich tracts occupy residues 406 to 417, 437 to 447, and 487 to 498; these read KTYSSDRQTPAM, SEMTRVTSTLP, and QSGSPESSSGQT. Residue S490 is modified to Phosphoserine. The C2H2-type 1 zinc finger occupies 512–534; that stretch reads LTCSICLKEFKSLPALNGHMRSH. The span at 551 to 579 shows a compositional bias: pro residues; it reads APPPQPQPQPQPQQPLPPPPPPPPPPQLP. A compositionally biased stretch (polar residues) spans 604 to 613; the sequence is SSQGFTNSVA. N6-acetyllysine occurs at positions 639 and 646. Position 773 is a phosphothreonine (T773). The ELM2 domain maps to 785–876; that stretch reads PRINIGLRFQ…ATLEMLLLRK (92 aa). Residues 891 to 942 enclose the SANT domain; sequence AGSDKWTSLERKLFNKALATYSKDFIFVQKMVKSKTVAQCVEYYYTWKKIMR. Positions 956–975 are enriched in acidic residues; sequence DDCMTSEEEEEAEEEEEDPE. Disordered stretches follow at residues 956–1016 and 1043–1087; these read DDCM…QQPS and HGGT…GETD. Residue T960 is modified to Phosphothreonine. Position 961 is a phosphoserine (S961). Basic and acidic residues predominate over residues 976–990; that stretch reads EDRKSIKEEESEVAK. A C2H2-type 2 zinc finger spans residues 1019-1043; that stretch reads FICEMPNCGAVFSSRQALNGHARIH. Over residues 1072–1086 the composition is skewed to low complexity; that stretch reads SVKSSPSHSTTSGET. The C2H2-type 3 zinc-finger motif lies at 1092 to 1114; that stretch reads FPCKECGKVFFKIKSRNAHMKTH.

Interacts with CREBBP and EP300. Interacts with DNTTIP1 and DNTT. In terms of tissue distribution, highly expressed in kidney, lung and brain. In the brain, expression was seen in the basal ganglia, hippocampus, piriform cortex, cerebral cortex, ventromedial nucleus of the hypothalamus and the dorsal and superior central nuclei of the raphe.

It is found in the nucleus. In terms of biological role, binds DNA and activates transcription of CYP11A1. Interaction with CREBBP and EP300 results in a synergistic transcriptional activation of CYP11A1. The sequence is that of Transcriptional-regulating factor 1 (Trerf1) from Mus musculus (Mouse).